The following is a 215-amino-acid chain: Cytochrome b6 (215 aa).

The chain crosses the membrane as a helical span at residues 32 to 52; it reads IFYCIGGITFTCFIMQVASGF. C35 contacts heme c. Residues H86 and H100 each coordinate heme b. The next 3 helical transmembrane spans lie at 90–110, 116–136, and 186–206; these read ASMM…TGGF, LTWV…VTGY, and LHTF…FLMI. Heme b is bound by residues H187 and H202.

The protein belongs to the cytochrome b family. PetB subfamily. In terms of assembly, the 4 large subunits of the cytochrome b6-f complex are cytochrome b6, subunit IV (17 kDa polypeptide, PetD), cytochrome f and the Rieske protein, while the 4 small subunits are PetG, PetL, PetM and PetN. The complex functions as a dimer. Heme b serves as cofactor. It depends on heme c as a cofactor.

The protein localises to the plastid. It is found in the chloroplast thylakoid membrane. In terms of biological role, component of the cytochrome b6-f complex, which mediates electron transfer between photosystem II (PSII) and photosystem I (PSI), cyclic electron flow around PSI, and state transitions. This Mesostigma viride (Green alga) protein is Cytochrome b6.